We begin with the raw amino-acid sequence, 531 residues long: High-affinity glucose transporter ght2 (531 aa).

Residues 5-13 (RGKNFTLVM) are Cytoplasmic-facing. The chain crosses the membrane as a helical span at residues 14-34 (LIFVSMAGWMFGADTGSIGGV). Residues 35 to 62 (TSMRDFRERYADRYDPITDQYSLSSARQ) are Extracellular-facing. Residues 63–83 (GLLTGMVNVGSLFGCIISSPI) form a helical membrane-spanning segment. The Cytoplasmic portion of the chain corresponds to 84–91 (ADRFGKRL). The chain crosses the membrane as a helical span at residues 92-112 (SIIGFCAVYIIGIIVQVTAVP). Residues 113-116 (SWVQ) are Extracellular-facing. Residues 117 to 137 (IMVAKIWTGIGIGALSVLAPG) traverse the membrane as a helical segment. The Cytoplasmic segment spans residues 138-148 (YQSETAPPSIR). The helical transmembrane segment at 149–169 (GTVVVTYQLFVTGGIFIAACI) threads the bilayer. Residues 170-183 (NMGTHKLHKTAQWR) are Extracellular-facing. Residues 184-204 (VSIGINLLWGIITMIGILFLP) form a helical membrane-spanning segment. Over 205–270 (ESPRYLIQVG…IFGKDIRYRT (66 aa)) the chain is Cytoplasmic. The helical transmembrane segment at 271–289 (FLGMFVMSLQQLTGNNYFF) threads the bilayer. Topologically, residues 290-305 (YYGFSVMQGAGINSPY) are extracellular. The chain crosses the membrane as a helical span at residues 306–326 (LSAMILDAVNFGCTFGGMYVL). At 327 to 332 (ERFGRR) the chain is on the cytoplasmic side. The chain crosses the membrane as a helical span at residues 333–353 (NPLIIGGIWQSICFFIYSAVG). The Extracellular portion of the chain corresponds to 354–367 (SRALYHKNGTSNTR). A glycan (N-linked (GlcNAc...) asparagine) is linked at Asn361. The chain crosses the membrane as a helical span at residues 368 to 388 (AGAVMIVMACLFIFGFAQTWA). At 389 to 408 (PAAYVIVGESYPVRYRSKCA) the chain is on the cytoplasmic side. Residues 409–429 (AVATASNWLWNFLISFFTPFI) form a helical membrane-spanning segment. At 430–436 (QASIGFK) the chain is on the extracellular side. Residues 437-457 (YGYVFASCNLTGAIVIFLFAK) form a helical membrane-spanning segment. The Cytoplasmic segment spans residues 458–531 (ETKGLTLEEI…QYSSHEEDYA (74 aa)). Residues 491-531 (KKVEKEKSRKGGARGESVEYVERASNTDSSPQYSSHEEDYA) form a disordered region. Ser507, Ser515, Ser519, and Ser520 each carry phosphoserine. Positions 514-524 (ASNTDSSPQYS) are enriched in polar residues. Tyr523 is modified (phosphotyrosine).

It belongs to the major facilitator superfamily. Sugar transporter (TC 2.A.1.1) family.

It is found in the membrane. Functionally, high-affinity glucose transporter. This Schizosaccharomyces pombe (strain 972 / ATCC 24843) (Fission yeast) protein is High-affinity glucose transporter ght2 (ght2).